Here is a 553-residue protein sequence, read N- to C-terminus: MEEKILPIALRNAIKYNGKANPKAVLGIFLSENPEYRSKAKEVMPIVEKVVEEVNKLSLDEIKKKLEELGEDVKKKEKKEKGLELPNVKDKVVMRFAPNPSGPLHIGHARAAVLNDYFVKKYGGKLILRLEDTDPKRVLPEAYDMIKEDLDWLGVKVDEVVIQSDRIELYYEYGRKLIEMGHAYVCDCNPEEFRELRNKGVPCKCRDRAIEDNLELWEKMLNGELENVAVRLKTDIKHKNPSIRDFPIFRVEKTPHPRTGDKYCVYPLMNFSVPVDDHLLGMTHVLRGKDHIVNTEKQAYIYKYFGWEMPEFIHYGILKIEDIVLSTSSMYKGIKEGLYSGWDDVRLGTLRALRRRGIKPEAIYEIMKRIGIKQADVKFSWENLYAINKELIDKDARRFFFVWNPKKLIIEGAEKKVLKLRMHPDRPEFGERELIFDGEVYVVGDELEENKMYRLMELFNIVVEKVDDIALAKYHSDDFKIARKNKAKIIHWIPVKDSVKVKVLMPDGEIKEGFAEKDFAKVEVDDIIQFERFGFVRIDKKDNDGFVCCYAHR.

The 'HIGH' region signature appears at 98–108 (PNPSGPLHIGH).

The protein belongs to the class-I aminoacyl-tRNA synthetase family. Glutamate--tRNA ligase type 2 subfamily.

It localises to the cytoplasm. The enzyme catalyses tRNA(Glu) + L-glutamate + ATP = L-glutamyl-tRNA(Glu) + AMP + diphosphate. Its function is as follows. Catalyzes the attachment of glutamate to tRNA(Glu) in a two-step reaction: glutamate is first activated by ATP to form Glu-AMP and then transferred to the acceptor end of tRNA(Glu). This is Glutamate--tRNA ligase from Methanocaldococcus jannaschii (strain ATCC 43067 / DSM 2661 / JAL-1 / JCM 10045 / NBRC 100440) (Methanococcus jannaschii).